The primary structure comprises 361 residues: Mitochondrial import receptor subunit TOM40 homolog (361 aa).

Residues 1 to 10 (MGNVLAASSP) show a composition bias toward low complexity. A disordered region spans residues 1–71 (MGNVLAASSP…AASAGGTADD (71 aa)). A compositionally biased stretch (pro residues) spans 11–36 (PAGPPPPPAPPLVGLPPPPPSPPGFT). The segment covering 40 to 52 (LGGGLGAGAGTGR) has biased composition (gly residues). The span at 59-71 (GTAAASAGGTADD) shows a compositional bias: low complexity.

This sequence belongs to the Tom40 family. In terms of assembly, forms part of the preprotein translocase complex of the outer mitochondrial membrane (TOM complex) which consists of at least 7 different proteins (TOMM5, TOMM6, TOMM7, TOMM20, TOMM22, TOMM40 and TOMM70). Interacts with mitochondrial targeting sequences. Interacts with TIMM29; linking the TIM22 complex to the TOM complex. Forms a complex with BCAP31 (via C-terminus) which mediates the translocation of components of the mitochondrial membrane respiratory chain NADH dehydrogenase (Complex I) from the cytosol to the mitochondria. Interacts (via N-terminus) with CYP1A1 (via mitochondrial targeting signal); this interaction is required for CYP1A1 translocation across the mitochondrial outer membrane.

The protein resides in the mitochondrion outer membrane. In terms of biological role, channel-forming protein essential for import of protein precursors into mitochondria. Plays a role in the assembly of the mitochondrial membrane respiratory chain NADH dehydrogenase (Complex I) by forming a complex with BCAP31 and mediating the translocation of Complex I components from the cytosol to the mitochondria. This chain is Mitochondrial import receptor subunit TOM40 homolog, found in Bos taurus (Bovine).